Here is a 597-residue protein sequence, read N- to C-terminus: Arginine--tRNA ligase (597 aa).

The short motif at 125–135 (PNTNKPLHLGH) is the 'HIGH' region element.

It belongs to the class-I aminoacyl-tRNA synthetase family. Monomer.

It localises to the cytoplasm. It catalyses the reaction tRNA(Arg) + L-arginine + ATP = L-arginyl-tRNA(Arg) + AMP + diphosphate. This Porphyromonas gingivalis (strain ATCC BAA-308 / W83) protein is Arginine--tRNA ligase.